We begin with the raw amino-acid sequence, 938 residues long: LPS-assembly protein LptD (938 aa).

Residues 1–33 (MAVKHPAFRKKFPLLVTGSLLALQPAFSLQSFA) form the signal peptide. Residues 52–96 (KTATSALPPRPQHSRSAVSTTSGSATATATKQEPAPVLVTESKGR) form a disordered region. Residues 65–81 (SRSAVSTTSGSATATAT) show a composition bias toward low complexity.

The protein belongs to the LptD family. Component of the lipopolysaccharide transport and assembly complex. Interacts with LptE and LptA.

The protein localises to the cell outer membrane. Together with LptE, is involved in the assembly of lipopolysaccharide (LPS) at the surface of the outer membrane. This is LPS-assembly protein LptD from Ectopseudomonas mendocina (strain ymp) (Pseudomonas mendocina).